The primary structure comprises 482 residues: Glutamate--tRNA ligase (482 aa).

A 'HIGH' region motif is present at residues 9-19 (PSPTGYLHIGG). Residues 252 to 256 (KLSKR) carry the 'KMSKS' region motif. Residue Lys-255 coordinates ATP.

This sequence belongs to the class-I aminoacyl-tRNA synthetase family. Glutamate--tRNA ligase type 1 subfamily. Monomer.

It is found in the cytoplasm. The catalysed reaction is tRNA(Glu) + L-glutamate + ATP = L-glutamyl-tRNA(Glu) + AMP + diphosphate. In terms of biological role, catalyzes the attachment of glutamate to tRNA(Glu) in a two-step reaction: glutamate is first activated by ATP to form Glu-AMP and then transferred to the acceptor end of tRNA(Glu). This is Glutamate--tRNA ligase from Ureaplasma urealyticum serovar 10 (strain ATCC 33699 / Western).